The primary structure comprises 833 residues: Leucine--tRNA ligase (833 aa).

Residues 41 to 52 (PYPSGAGLHVGH) carry the 'HIGH' region motif. The 'KMSKS' region motif lies at 610-614 (KMSKS). Residue Lys-613 coordinates ATP.

The protein belongs to the class-I aminoacyl-tRNA synthetase family.

The protein resides in the cytoplasm. It carries out the reaction tRNA(Leu) + L-leucine + ATP = L-leucyl-tRNA(Leu) + AMP + diphosphate. The sequence is that of Leucine--tRNA ligase from Streptococcus pyogenes serotype M2 (strain MGAS10270).